A 322-amino-acid chain; its full sequence is Cytochrome f (322 aa).

An N-terminal signal peptide occupies residues 1 to 36 (MQKNRNTFSWVKEQMTRCISVSMMIYVITRASISNA). 4 residues coordinate heme: Y37, C57, C60, and H61. The chain crosses the membrane as a helical span at residues 288–308 (IQGLLFFLASVILAQIFLVLK).

The protein belongs to the cytochrome f family. As to quaternary structure, the 4 large subunits of the cytochrome b6-f complex are cytochrome b6, subunit IV (17 kDa polypeptide, petD), cytochrome f and the Rieske protein, while the 4 small subunits are PetG, PetL, PetM and PetN. The complex functions as a dimer. It depends on heme as a cofactor.

It localises to the plastid. The protein resides in the chloroplast thylakoid membrane. Functionally, component of the cytochrome b6-f complex, which mediates electron transfer between photosystem II (PSII) and photosystem I (PSI), cyclic electron flow around PSI, and state transitions. This Nymphaea alba (White water-lily) protein is Cytochrome f.